The chain runs to 860 residues: Leucine--tRNA ligase (860 aa).

The 'HIGH' region signature appears at 42–52 (PYPSGRLHMGH). Residues 619–623 (KMSKS) carry the 'KMSKS' region motif. Lysine 622 is a binding site for ATP.

Belongs to the class-I aminoacyl-tRNA synthetase family.

The protein localises to the cytoplasm. The enzyme catalyses tRNA(Leu) + L-leucine + ATP = L-leucyl-tRNA(Leu) + AMP + diphosphate. The protein is Leucine--tRNA ligase of Edwardsiella ictaluri (strain 93-146).